The chain runs to 380 residues: Glucose ABC transporter permease protein TsgB13 (380 aa).

The next 10 helical transmembrane spans lie at 20–40, 59–81, 94–114, 115–135, 148–166, 202–222, 255–275, 282–301, 305–325, and 328–348; these read GTPVLTVLAALAVGGVALVAL, QFGLTEVLVRAVPLILAGLAVYL, GQLLLGALAGTWVAVNVSLPA, VALLPLMFLAACVAGAFWAGI, IITSLLLTFVAQELQSYLL, IPLFADVHAGLLVAVAAVVAT, VYLFVFLLGGAFAALGGIAEI, FRAAFAPGYGFTAIPIALLG, AVKVTLAGLFFAVLFVGGSSV, and AFGVPAALVEIIQALVILFLI.

The protein belongs to the binding-protein-dependent transport system permease family. In terms of assembly, the complex is composed of two ATP-binding proteins (TsgD13), two transmembrane proteins (TsgB13 and TsgC13) and a solute-binding protein (TsgA13).

It localises to the cell membrane. Part of an ABC transporter complex involved in glucose import. Responsible for the translocation of the substrate across the membrane. The chain is Glucose ABC transporter permease protein TsgB13 (tsgB13) from Haloferax volcanii (strain ATCC 29605 / DSM 3757 / JCM 8879 / NBRC 14742 / NCIMB 2012 / VKM B-1768 / DS2) (Halobacterium volcanii).